Here is a 638-residue protein sequence, read N- to C-terminus: Broad-specificity ulvan lyase (638 aa).

The signal sequence occupies residues 1–27 (MKRRNFIQLSSLATIGMSLPSAGIVNA).

This sequence belongs to the polysaccharide lyase 37 family.

It is found in the periplasm. The enzyme catalyses Endolytic cleavage of (1-&gt;4)-beta-galactosaminic bonds between N-acetylgalactosamine and either D-glucuronic acid or L-iduronic acid to produce a mixture of Delta(4)-unsaturated oligosaccharides of different sizes that are ultimately degraded to Delta(4)-unsaturated tetra- and disaccharides.. The catalysed reaction is Elimination of sulfate, appears to act on linkages between N-acetyl-D-glucosamine and uronate. Product is an unsaturated sugar.. Functionally, broad-specificity lyase involved in ulvan degradation. Ulvan is the main polysaccharide component of the Ulvales (green seaweed) cell wall. It is composed of disaccharide building blocks comprising 3-sulfated rhamnose (Rha3S) linked to D-glucuronic acid (GlcA), L-iduronic acid (IduA), or D-xylose (Xyl). Ulvan lyase catalyzes the endolytic cleavage of the glycosidic bond between Rha3S and the uronic acids GlcA or IduA, producing oligosaccharides that have unsaturated 4-deoxy-L-threo-hex-4-enopyranosiduronic acid (deltaUA) at the non-reducing end. This results eventually in the degradation of the ulvan polysaccharide into deltaUA-Rha3S disaccharides and deltaUA-Rha3S-Xyl-Rha3S tetrasaccharides. It is also able to degrade the glycosaminoglycans heparan sulfate and chondroitin sulfate. Not active against pectin, xanthan or alginate. This chain is Broad-specificity ulvan lyase, found in Formosa agariphila (strain DSM 15362 / KCTC 12365 / LMG 23005 / KMM 3901 / M-2Alg 35-1).